Reading from the N-terminus, the 103-residue chain is MGKLTLLLLAILVWLQYSLWFGKNGIHDYTRVNDDVAAQQATNAKLKARNDQLFAEIDDLNGGQEALEERARNELSMTKPGETFYRLVPDASKRAQSAGQNNR.

Topologically, residues 1 to 3 (MGK) are cytoplasmic. The helical transmembrane segment at 4–21 (LTLLLLAILVWLQYSLWF) threads the bilayer. Residues 22 to 103 (GKNGIHDYTR…RAQSAGQNNR (82 aa)) lie on the Periplasmic side of the membrane. Residues 31 to 71 (RVNDDVAAQQATNAKLKARNDQLFAEIDDLNGGQEALEERA) are a coiled coil.

It belongs to the FtsB family. As to quaternary structure, part of a complex composed of FtsB, FtsL and FtsQ.

It localises to the cell inner membrane. Functionally, essential cell division protein. May link together the upstream cell division proteins, which are predominantly cytoplasmic, with the downstream cell division proteins, which are predominantly periplasmic. The protein is Cell division protein FtsB of Shigella boydii serotype 18 (strain CDC 3083-94 / BS512).